Consider the following 138-residue polypeptide: Histone H2A.Z (138 aa).

Positions 1–10 are enriched in gly residues; sequence MSSKVGGGKG. The segment at 1–21 is disordered; that stretch reads MSSKVGGGKGGKSKTSSEAKV. Residues K4 and K9 each carry the N6-acetyllysine modification.

The protein belongs to the histone H2A family. In terms of assembly, the nucleosome is a histone octamer containing two molecules each of H2A, H2B, H3 and H4 assembled in one H3-H4 heterotetramer and two H2A-H2B heterodimers. The octamer wraps approximately 147 bp of DNA. H2A or its variant H2A.Z forms a heterodimer with H2B. H2A.Z associates with the VPS72/SWC2 subunit of the SWR1 chromatin remodeling complex. Also interacts with RBP1/DNA-directed RNA polymerase II largest subunit. Post-translationally, acetylated once deposited into chromatin.

The protein localises to the nucleus. The protein resides in the chromosome. Its function is as follows. Variant histone H2A which can replace H2A in some nucleosomes. Nucleosomes wrap and compact DNA into chromatin, limiting DNA accessibility to the cellular machineries which require DNA as a template. Histones thereby play a central role in transcription regulation, DNA repair, DNA replication and chromosomal stability. DNA accessibility is regulated via a complex set of post-translational modifications of histones, also called histone code, and nucleosome remodeling. This variant is enriched at promoters, it may keep them in a repressed state until the appropriate activation signal is received. Near telomeres, it may counteract gene silencing caused by the spread of heterochromatin proteins. Required for the RNA polymerase II and SPT15/TBP recruitment to the target genes. Involved in chromosome stability. In Cryptococcus neoformans var. neoformans serotype D (strain B-3501A) (Filobasidiella neoformans), this protein is Histone H2A.Z (HTZ1).